The following is a 133-amino-acid chain: Small ribosomal subunit protein uS12c (133 aa).

The protein belongs to the universal ribosomal protein uS12 family. As to quaternary structure, part of the 30S ribosomal subunit.

It localises to the plastid. The protein localises to the chloroplast. Its function is as follows. With S4 and S5 plays an important role in translational accuracy. Located at the interface of the 30S and 50S subunits. The protein is Small ribosomal subunit protein uS12c (rps12) of Chlamydomonas reinhardtii (Chlamydomonas smithii).